We begin with the raw amino-acid sequence, 737 residues long: Angiotensin-converting enzyme-like protein Ace3 (737 aa).

An N-terminal signal peptide occupies residues 1–23 (MNLPWALLLVLLSHRQLLPWLRT). The Extracellular portion of the chain corresponds to 24 to 639 (VGETSLNDFY…TDTEPEQAYL (616 aa)). Residues 32 to 611 (FYSEAQAKLF…VKQGDTLGWP (580 aa)) form the Peptidase M2 domain. Cys146 and Cys152 form a disulfide bridge. Residues Arg180 and Tyr218 each contribute to the chloride site. The cysteines at positions 346 and 364 are disulfide-linked. 2 residues coordinate Zn(2+): His377 and His381. Residue Asn390 is glycosylated (N-linked (GlcNAc...) asparagine). Glu405 is a binding site for Zn(2+). Residues Trp479, Arg483, and Arg516 each contribute to the chloride site. A disulfide bond links Cys532 and Cys544. Residues 640–660 (GQWVLLSMSFFMLVLILALGF) form a helical membrane-spanning segment. Residues 661-700 (RLHYLEKQLLDEDTMILKTLPYSYFLGIAMEPHQAARKQW) are Cytoplasmic-facing. Residues 701-721 (LLLGLCCILMLCCIGLLIRIV) form a helical membrane-spanning segment. Residues 722–737 (TQNTENTPWMKNEGQS) lie on the Extracellular side of the membrane.

The protein belongs to the peptidase M2 family. In terms of assembly, interacts with IZUMO1. It depends on Zn(2+) as a cofactor. Expressed in sperm and testis (at protein level). Expressed in heart and testis. Not detected in kidney, lung, liver, brain, ovary, spleen and thymus.

Its subcellular location is the cytoplasmic vesicle. The protein localises to the secretory vesicle. It is found in the acrosome membrane. The polypeptide is Angiotensin-converting enzyme-like protein Ace3 (Mus musculus (Mouse)).